Reading from the N-terminus, the 218-residue chain is External core antigen (218 aa).

The N-terminal stretch at 1-19 (MYLFHLCLVFACVPCPTFQ) is a signal peptide. Positions 26-28 (GWL) are HBEAG. Basic residues predominate over residues 180-211 (RRRGGARASRSPRRRTPSPRRRRSQSPRRRRS). The interval 180–218 (RRRGGARASRSPRRRTPSPRRRRSQSPRRRRSQSPSANC) is disordered. Residues 190–196 (SPRRRTP) form a 1; half-length repeat. A 3 X 8 AA repeats of S-P-R-R-R-R-S-Q region spans residues 190-212 (SPRRRTPSPRRRRSQSPRRRRSQ). The propeptide occupies 190–218 (SPRRRTPSPRRRRSQSPRRRRSQSPSANC). 2 consecutive repeat copies span residues 197–204 (SPRRRRSQ) and 205–212 (SPRRRRSQ).

Belongs to the orthohepadnavirus precore antigen family. In terms of assembly, homodimerizes. Phosphorylated. In terms of processing, cleaved by host furin.

It is found in the secreted. The protein resides in the host nucleus. Its function is as follows. May regulate immune response to the intracellular capsid in acting as a T-cell tolerogen, by having an immunoregulatory effect which prevents destruction of infected cells by cytotoxic T-cells. This immune regulation may predispose to chronicity during perinatal infections and prevent severe liver injury during adult infections. This Marmota monax (Woodchuck) protein is External core antigen.